A 222-amino-acid chain; its full sequence is 2-C-methyl-D-erythritol 4-phosphate cytidylyltransferase (222 aa).

The protein belongs to the IspD/TarI cytidylyltransferase family. IspD subfamily.

The catalysed reaction is 2-C-methyl-D-erythritol 4-phosphate + CTP + H(+) = 4-CDP-2-C-methyl-D-erythritol + diphosphate. Its pathway is isoprenoid biosynthesis; isopentenyl diphosphate biosynthesis via DXP pathway; isopentenyl diphosphate from 1-deoxy-D-xylulose 5-phosphate: step 2/6. Its function is as follows. Catalyzes the formation of 4-diphosphocytidyl-2-C-methyl-D-erythritol from CTP and 2-C-methyl-D-erythritol 4-phosphate (MEP). This chain is 2-C-methyl-D-erythritol 4-phosphate cytidylyltransferase, found in Porphyromonas gingivalis (strain ATCC BAA-308 / W83).